The chain runs to 352 residues: Chorismate synthase (352 aa).

R48 contributes to the NADP(+) binding site. Residues 125 to 127 (RSS), 238 to 239 (NA), G278, 293 to 297 (KPTSS), and R319 each bind FMN.

Belongs to the chorismate synthase family. As to quaternary structure, homotetramer. The cofactor is FMNH2.

It carries out the reaction 5-O-(1-carboxyvinyl)-3-phosphoshikimate = chorismate + phosphate. Its pathway is metabolic intermediate biosynthesis; chorismate biosynthesis; chorismate from D-erythrose 4-phosphate and phosphoenolpyruvate: step 7/7. Functionally, catalyzes the anti-1,4-elimination of the C-3 phosphate and the C-6 proR hydrogen from 5-enolpyruvylshikimate-3-phosphate (EPSP) to yield chorismate, which is the branch point compound that serves as the starting substrate for the three terminal pathways of aromatic amino acid biosynthesis. This reaction introduces a second double bond into the aromatic ring system. The polypeptide is Chorismate synthase (Legionella pneumophila subsp. pneumophila (strain Philadelphia 1 / ATCC 33152 / DSM 7513)).